The primary structure comprises 615 residues: DNA mismatch repair protein MutL (615 aa).

The disordered stretch occupies residues Phe-363–Tyr-397. The span at Ala-364 to Pro-391 shows a compositional bias: low complexity.

It belongs to the DNA mismatch repair MutL/HexB family.

Its function is as follows. This protein is involved in the repair of mismatches in DNA. It is required for dam-dependent methyl-directed DNA mismatch repair. May act as a 'molecular matchmaker', a protein that promotes the formation of a stable complex between two or more DNA-binding proteins in an ATP-dependent manner without itself being part of a final effector complex. The sequence is that of DNA mismatch repair protein MutL from Escherichia coli (strain ATCC 8739 / DSM 1576 / NBRC 3972 / NCIMB 8545 / WDCM 00012 / Crooks).